A 287-amino-acid polypeptide reads, in one-letter code: tRNA pseudouridine synthase B (287 aa).

Residue Asp-38 is the Nucleophile of the active site.

Belongs to the pseudouridine synthase TruB family. Type 1 subfamily.

It carries out the reaction uridine(55) in tRNA = pseudouridine(55) in tRNA. In terms of biological role, responsible for synthesis of pseudouridine from uracil-55 in the psi GC loop of transfer RNAs. This is tRNA pseudouridine synthase B from Fusobacterium nucleatum subsp. nucleatum (strain ATCC 25586 / DSM 15643 / BCRC 10681 / CIP 101130 / JCM 8532 / KCTC 2640 / LMG 13131 / VPI 4355).